We begin with the raw amino-acid sequence, 203 residues long: Ribonuclease HII (203 aa).

One can recognise an RNase H type-2 domain in the interval 15 to 201 (LLVAGLDEAG…VAQAPLRFPE (187 aa)). A divalent metal cation-binding residues include Asp21, Glu22, and Asp111.

It belongs to the RNase HII family. Mn(2+) is required as a cofactor. It depends on Mg(2+) as a cofactor.

Its subcellular location is the cytoplasm. It catalyses the reaction Endonucleolytic cleavage to 5'-phosphomonoester.. In terms of biological role, endonuclease that specifically degrades the RNA of RNA-DNA hybrids. The sequence is that of Ribonuclease HII from Thermus thermophilus (strain ATCC 27634 / DSM 579 / HB8).